The following is a 295-amino-acid chain: bZIP transcription factor 60 (295 aa).

Residues Pro101–Ala154 are disordered. Positions Asp106–Ile127 are enriched in basic and acidic residues. A compositionally biased stretch (acidic residues) spans His128 to Asp138. The 64-residue stretch at Val140–Gly203 folds into the bZIP domain. The interval Lys142–Lys162 is basic motif. The leucine-zipper stretch occupies residues Leu168–Leu182. The chain crosses the membrane as a helical span at residues Leu224–Met244.

The protein belongs to the bZIP family. Interacts with BZIP28. In terms of tissue distribution, expressed in seedlings, rosette and cauline leaves, stems, buds, flowers, siliques, immature seeds, anthers and pollen grains.

It is found in the endoplasmic reticulum membrane. The protein resides in the nucleus. Functionally, transcription factor involved in the unfolded protein response (UPR). Acts during endoplasmic reticulum stress (ER) by activating unfolded protein response (UPR) target genes via direct binding to the UPR element (UPRE). Plays a role in plant immunity and abiotic stress responses. The sequence is that of bZIP transcription factor 60 from Arabidopsis thaliana (Mouse-ear cress).